The primary structure comprises 392 residues: Phospho-N-acetylmuramoyl-pentapeptide-transferase (392 aa).

Helical transmembrane passes span 24 to 44 (YLTF…LLAG), 76 to 96 (TMGG…WFDL), 100 to 120 (FVWV…VDDW), 137 to 157 (YFWQ…CISE), 193 to 213 (VSYP…IVGS), 225 to 245 (GLAI…AYVT), 262 to 282 (AGEL…FLWF), 289 to 309 (VFMG…IAII), 314 to 334 (IVLA…MLQV), and 369 to 389 (QVVV…LTTL).

Belongs to the glycosyltransferase 4 family. MraY subfamily. The cofactor is Mg(2+).

The protein resides in the cell inner membrane. The catalysed reaction is UDP-N-acetyl-alpha-D-muramoyl-L-alanyl-gamma-D-glutamyl-meso-2,6-diaminopimeloyl-D-alanyl-D-alanine + di-trans,octa-cis-undecaprenyl phosphate = di-trans,octa-cis-undecaprenyl diphospho-N-acetyl-alpha-D-muramoyl-L-alanyl-D-glutamyl-meso-2,6-diaminopimeloyl-D-alanyl-D-alanine + UMP. It participates in cell wall biogenesis; peptidoglycan biosynthesis. Its function is as follows. Catalyzes the initial step of the lipid cycle reactions in the biosynthesis of the cell wall peptidoglycan: transfers peptidoglycan precursor phospho-MurNAc-pentapeptide from UDP-MurNAc-pentapeptide onto the lipid carrier undecaprenyl phosphate, yielding undecaprenyl-pyrophosphoryl-MurNAc-pentapeptide, known as lipid I. The chain is Phospho-N-acetylmuramoyl-pentapeptide-transferase from Paracidovorax citrulli (strain AAC00-1) (Acidovorax citrulli).